The primary structure comprises 221 residues: Adenylate kinase (221 aa).

Position 10 to 15 (10 to 15 (GAGKGT)) interacts with ATP. The segment at 30 to 59 (STGDMLRAAVKAGTPLGVEAKKVMDAGGLV) is NMP. Residues Thr31, Arg36, 57 to 59 (GLV), 85 to 88 (GFPR), and Gln92 contribute to the AMP site. Residues 122–159 (GRRVHVASGRTYHLKYNPPKTEGVDDETGEPLIQRDDD) form an LID region. ATP-binding positions include Arg123 and 132-133 (TY). Residues 138–159 (NPPKTEGVDDETGEPLIQRDDD) form a disordered region. Residues Arg156 and Arg167 each contribute to the AMP site. Gly207 serves as a coordination point for ATP.

It belongs to the adenylate kinase family. As to quaternary structure, monomer.

The protein resides in the cytoplasm. The enzyme catalyses AMP + ATP = 2 ADP. Its pathway is purine metabolism; AMP biosynthesis via salvage pathway; AMP from ADP: step 1/1. Its function is as follows. Catalyzes the reversible transfer of the terminal phosphate group between ATP and AMP. Plays an important role in cellular energy homeostasis and in adenine nucleotide metabolism. The sequence is that of Adenylate kinase from Cupriavidus taiwanensis (strain DSM 17343 / BCRC 17206 / CCUG 44338 / CIP 107171 / LMG 19424 / R1) (Ralstonia taiwanensis (strain LMG 19424)).